A 288-amino-acid polypeptide reads, in one-letter code: Borealin (288 aa).

The interval 1–58 is required for interaction with INCENP; the sequence is MAPKKRSSRGTRTNTLRSRKLASFLKDFDREVQVRTKQIESDRQTLLKEVENLYNIEV. A required for centromere localization region spans residues 1-88; that stretch reads MAPKKRSSRG…NRQALEEAAT (88 aa). The segment at 1–149 is required for interaction with SENP3; it reads MAPKKRSSRG…RKSHKNLRSA (149 aa). The interval 10–109 is required to form a minimal CPC core complex that localizes to the central spindle and midbody and properly executes the role of the CPC during cytokinesis; that stretch reads GTRTNTLRSR…TAEAIQTPLK (100 aa). The required for interaction with INCENP and BIRC5 stretch occupies residues 20–78; that stretch reads KLASFLKDFDREVQVRTKQIESDRQTLLKEVENLYNIEVLRLPKALQVMKWLDYFALGG. Threonine 88 carries the phosphothreonine; by TTK modification. Arginine 91 bears the Citrulline mark. At threonine 94 the chain carries Phosphothreonine; by TTK. At threonine 106 the chain carries Phosphothreonine. Serine 110 carries the phosphoserine modification. Residues 124–134 show a composition bias toward acidic residues; sequence KEEEEDEEEEG. Positions 124 to 173 are disordered; that stretch reads KEEEEDEEEEGGGGGGRKSHKNLRSARVKRCPPSKKRTQSIQGRSRSKRL. Residues 140-161 are compositionally biased toward basic residues; sequence RKSHKNLRSARVKRCPPSKKRT. Residue lysine 144 forms a Glycyl lysine isopeptide (Lys-Gly) (interchain with G-Cter in SUMO2) linkage. Position 174 is a phosphoserine; by AURKB (serine 174). Residues threonine 197 and threonine 212 each carry the phosphothreonine modification. Phosphoserine occurs at positions 227, 232, 246, and 252.

This sequence belongs to the borealin family. As to quaternary structure, may form homooligomers and homodimers. Component of the chromosomal passenger complex (CPC) composed of at least BIRC5/survivin, CDCA8/borealin, INCENP, AURKB or AURKC; in the complex forms a triple-helix bundle-based subcomplex with INCENP and BIRC5. Interacts with SENP3, UBE2I and RANBP2. Interacts (phosphorylated) with SGO1 and SGO2; the association is dependent on CDK1. Post-translationally, phosphorylated by TTK, essentially at Thr-88 and Thr-94. Phosphorylation (probably by CDK1) promotes targeting of the CPC to centromeric DNA. Sumoylated by UBE2I and RANBP2. Desumoylated by SENP3 through the removal of SUMO2 and SUMO3. In terms of processing, citrullinated by PADI4.

It is found in the nucleus. It localises to the nucleolus. The protein localises to the cytoplasm. Its subcellular location is the chromosome. The protein resides in the centromere. It is found in the cytoskeleton. It localises to the spindle. Its function is as follows. Component of the chromosomal passenger complex (CPC), a complex that acts as a key regulator of mitosis. The CPC complex has essential functions at the centromere in ensuring correct chromosome alignment and segregation and is required for chromatin-induced microtubule stabilization and spindle assembly. In the complex, it may be required to direct the CPC to centromeric DNA. This Rattus norvegicus (Rat) protein is Borealin (Cdca8).